The chain runs to 82 residues: Progonadoliberin-3 (82 aa).

A signal peptide spans 1 to 23 (MDLSNRTVVQVVVLALVAQVTLS). Glutamine 24 is modified (pyrrolidone carboxylic acid). A Glycine amide modification is found at glycine 33.

Belongs to the GnRH family.

Its subcellular location is the secreted. Functionally, stimulates the secretion of gonadotropins. This is Progonadoliberin-3 (gnrh3) from Salmo trutta (Brown trout).